A 418-amino-acid polypeptide reads, in one-letter code: E3 ubiquitin-protein ligase pellino homolog 1 (418 aa).

Residues 13–200 (APVKYGELIV…MHPRNGFTED (188 aa)) enclose the FHA; atypical domain. Serine 121 is modified (phosphoserine). Threonine 127 is subject to Phosphothreonine. The tract at residues 311–399 (CGHVHGYHNW…TFHAACPFCA (89 aa)) is ring-like domain; necessary for ubiquitination of RIPK3.

It belongs to the pellino family. As to quaternary structure, interacts with MAP3K7. Upon IL1B treatment, forms a complex with TRAF6, IRAK1, IRAK4 and MYD88; this complex recruits MAP3K7/TAK1, TAB1 and TAB2 to mediate NF-kappa-B activation. Direct binding of SMAD6 to PELI1 prevents the complex formation and hence negatively regulates IL1R-TLR signaling and eventually NF-kappa-B-mediated gene expression. Interacts (via atypical FHA domain) with RIPK3. Binds preferentially to the 'Thr-182' phosphorylated form of RIPK3. Interacts with RIPK1. Post-translationally, phosphorylation by IRAK1 and IRAK4 enhances its E3 ligase activity. Phosphorylated by ATM in response to DNA damage, promoting localization to DNA double-strand breaks (DSBs) and ability to mediate 'Lys-63'-linked ubiquitination of NBN. Sumoylated.

Its subcellular location is the chromosome. The catalysed reaction is S-ubiquitinyl-[E2 ubiquitin-conjugating enzyme]-L-cysteine + [acceptor protein]-L-lysine = [E2 ubiquitin-conjugating enzyme]-L-cysteine + N(6)-ubiquitinyl-[acceptor protein]-L-lysine.. The protein operates within protein modification; protein ubiquitination. E3 ubiquitin ligase catalyzing the covalent attachment of ubiquitin moieties onto substrate proteins. Involved in the TLR and IL-1 signaling pathways via interaction with the complex containing IRAK kinases and TRAF6. Acts as a positive regulator of inflammatory response in microglia through activation of NF-kappa-B and MAP kinase. Mediates 'Lys-63'-linked polyubiquitination of IRAK1 allowing subsequent NF-kappa-B activation. Conjugates 'Lys-63'-linked ubiquitin chains to the adapter protein ASC/PYCARD, which in turn is crucial for NLRP3 inflammasome activation. Mediates 'Lys-48'-linked polyubiquitination of RIPK3 leading to its subsequent proteasome-dependent degradation; preferentially recognizes and mediates the degradation of the 'Thr-182' phosphorylated form of RIPK3. Negatively regulates necroptosis by reducing RIPK3 expression. Mediates 'Lys-63'-linked ubiquitination of RIPK1. Following phosphorylation by ATM, catalyzes 'Lys-63'-linked ubiquitination of NBN, promoting DNA repair via homologous recombination. Negatively regulates activation of the metabolic mTORC1 signaling pathway by mediating 'Lys-63'-linked ubiquitination of mTORC1-inhibitory protein TSC1 and thereby promoting TSC1/TSC2 complex stability. This Mus musculus (Mouse) protein is E3 ubiquitin-protein ligase pellino homolog 1 (Peli1).